Here is a 96-residue protein sequence, read N- to C-terminus: Guanine nucleotide-binding protein alpha-9 subunit (96 aa).

Residues 2–96 (YFHSTAIILF…ISASLKMVGV (95 aa)) enclose the G-alpha domain. A G1 motif region spans residues 9–16 (ILFLNKID). Residues 13 to 16 (NKID) and Ala69 each bind GTP. Positions 67 to 72 (TSATDT) are G2 motif.

It belongs to the G-alpha family. As to quaternary structure, g proteins are composed of 3 units; alpha, beta and gamma. The alpha chain contains the guanine nucleotide binding site. In terms of tissue distribution, expressed in ASJ neurons.

Its function is as follows. Guanine nucleotide-binding proteins (G proteins) are involved as modulators or transducers in various transmembrane signaling systems. Plays a role in innate immunity and maintaining survival in response to metabolites of E.coli. This might be by regulating the expression and signaling of genes such as lys-8, ins-7 and daf-28. Has a role in lifespan to promote longevity. The polypeptide is Guanine nucleotide-binding protein alpha-9 subunit (Caenorhabditis elegans).